The chain runs to 338 residues: DNA-directed RNA polymerase subunit alpha (338 aa).

The segment at 1-225 is alpha N-terminal domain (alpha-NTD); the sequence is MLISQRPTIT…ELFGLARELN (225 aa). Positions 240 to 338 are alpha C-terminal domain (alpha-CTD); the sequence is TEYIAAYSMP…YIDVEAEDSE (99 aa). The interval 319–338 is disordered; it reads LEGYDAETGGYIDVEAEDSE.

This sequence belongs to the RNA polymerase alpha chain family. In terms of assembly, homodimer. The RNAP catalytic core consists of 2 alpha, 1 beta, 1 beta' and 1 omega subunit. When a sigma factor is associated with the core the holoenzyme is formed, which can initiate transcription.

It carries out the reaction RNA(n) + a ribonucleoside 5'-triphosphate = RNA(n+1) + diphosphate. Its function is as follows. DNA-dependent RNA polymerase catalyzes the transcription of DNA into RNA using the four ribonucleoside triphosphates as substrates. The sequence is that of DNA-directed RNA polymerase subunit alpha from Corynebacterium glutamicum (strain R).